The sequence spans 418 residues: AP-3 complex subunit mu-1 (418 aa).

The region spanning 176–417 (NNEAYFDVVE…VTKAGKFQVR (242 aa)) is the MHD domain.

Belongs to the adaptor complexes medium subunit family. Adaptor protein complex 3 (AP-3) is a heterotetramer composed of two large adaptins (delta-type subunit AP3D1 and beta-type subunit AP3B1 or AP3B2), a medium adaptin (mu-type subunit AP3M1 or AP3M2) and a small adaptin (sigma-type subunit APS1 or AP3S2). Interacts with AGAP1. AP-3 associates with the BLOC-1 complex.

The protein localises to the golgi apparatus. It is found in the cytoplasmic vesicle membrane. Part of the AP-3 complex, an adaptor-related complex which is not clathrin-associated. The complex is associated with the Golgi region as well as more peripheral structures. It facilitates the budding of vesicles from the Golgi membrane and may be directly involved in trafficking to lysosomes. In concert with the BLOC-1 complex, AP-3 is required to target cargos into vesicles assembled at cell bodies for delivery into neurites and nerve terminals. The protein is AP-3 complex subunit mu-1 (AP3M1) of Bos taurus (Bovine).